We begin with the raw amino-acid sequence, 365 residues long: Putative glycosyltransferase C06E1.7 (365 aa).

The protein belongs to the glycosyltransferase 11 family.

In Caenorhabditis elegans, this protein is Putative glycosyltransferase C06E1.7.